A 1220-amino-acid chain; its full sequence is DNA-directed RNA polymerase subunit beta (1220 aa).

The protein belongs to the RNA polymerase beta chain family. In terms of assembly, the RNAP catalytic core consists of 2 alpha, 1 beta, 1 beta' and 1 omega subunit. When a sigma factor is associated with the core the holoenzyme is formed, which can initiate transcription.

It catalyses the reaction RNA(n) + a ribonucleoside 5'-triphosphate = RNA(n+1) + diphosphate. Functionally, DNA-dependent RNA polymerase catalyzes the transcription of DNA into RNA using the four ribonucleoside triphosphates as substrates. This is DNA-directed RNA polymerase subunit beta from Mesomycoplasma hyopneumoniae (strain 232) (Mycoplasma hyopneumoniae).